A 207-amino-acid polypeptide reads, in one-letter code: N-(5'-phosphoribosyl)anthranilate isomerase (207 aa).

Belongs to the TrpF family.

It catalyses the reaction N-(5-phospho-beta-D-ribosyl)anthranilate = 1-(2-carboxyphenylamino)-1-deoxy-D-ribulose 5-phosphate. It participates in amino-acid biosynthesis; L-tryptophan biosynthesis; L-tryptophan from chorismate: step 3/5. The chain is N-(5'-phosphoribosyl)anthranilate isomerase from Legionella pneumophila subsp. pneumophila (strain Philadelphia 1 / ATCC 33152 / DSM 7513).